A 161-amino-acid polypeptide reads, in one-letter code: Protein-export protein SecB (161 aa).

It belongs to the SecB family. As to quaternary structure, homotetramer, a dimer of dimers. One homotetramer interacts with 1 SecA dimer.

It localises to the cytoplasm. In terms of biological role, one of the proteins required for the normal export of preproteins out of the cell cytoplasm. It is a molecular chaperone that binds to a subset of precursor proteins, maintaining them in a translocation-competent state. It also specifically binds to its receptor SecA. The chain is Protein-export protein SecB from Shewanella sp. (strain ANA-3).